A 424-amino-acid chain; its full sequence is Tyrosine--tRNA ligase (424 aa).

Residue tyrosine 37 participates in L-tyrosine binding. Positions 42-51 (PTADSLHLGH) match the 'HIGH' region motif. An N6-acetyllysine modification is found at lysine 144. Tyrosine 175 and glutamine 179 together coordinate L-tyrosine. A 'KMSKS' region motif is present at residues 235–239 (KFGKT). Lysine 238 lines the ATP pocket. Residues 357–414 (ADLMQALVDSELQPSRGQARKTIASNAITINGEKQSDPEYFFKEEDRLFGRFTLLRRG) form the S4 RNA-binding domain.

Belongs to the class-I aminoacyl-tRNA synthetase family. TyrS type 1 subfamily. As to quaternary structure, homodimer.

Its subcellular location is the cytoplasm. It carries out the reaction tRNA(Tyr) + L-tyrosine + ATP = L-tyrosyl-tRNA(Tyr) + AMP + diphosphate + H(+). Functionally, catalyzes the attachment of tyrosine to tRNA(Tyr) in a two-step reaction: tyrosine is first activated by ATP to form Tyr-AMP and then transferred to the acceptor end of tRNA(Tyr). The chain is Tyrosine--tRNA ligase from Escherichia coli O127:H6 (strain E2348/69 / EPEC).